Consider the following 212-residue polypeptide: MTDKIVTSEEMRHYDSYTINTIGIPSLVLMERAALAVRDEILHAFPIALKDVVVVAGSGNNGGDGIAIARLLHLAGVHVTILNIGNPKHASAEHQTQEKIAQYYQIPETSDLAVLNKATLIVDAMFGIGIDRAVKGAYADAINAINNTDVVVVAVDMPSGINTDTGEVMGTAVRATTTVTFAYNKVGLTKNAGKDYAGNIVVANDMGTYAVD.

In terms of domain architecture, YjeF N-terminal spans 11-212; the sequence is MRHYDSYTIN…ANDMGTYAVD (202 aa). 60–64 is a (6S)-NADPHX binding site; sequence NNGGD. Asparagine 61 and aspartate 123 together coordinate K(+). (6S)-NADPHX-binding positions include 127-133, tyrosine 138, and aspartate 156; that span reads GIGIDRA. Residue serine 159 coordinates K(+).

Belongs to the NnrE/AIBP family. K(+) serves as cofactor.

It carries out the reaction (6R)-NADHX = (6S)-NADHX. It catalyses the reaction (6R)-NADPHX = (6S)-NADPHX. Its function is as follows. Catalyzes the epimerization of the S- and R-forms of NAD(P)HX, a damaged form of NAD(P)H that is a result of enzymatic or heat-dependent hydration. This is a prerequisite for the S-specific NAD(P)H-hydrate dehydratase to allow the repair of both epimers of NAD(P)HX. This is NAD(P)H-hydrate epimerase from Limosilactobacillus reuteri (strain ATCC 55730 / SD2112) (Lactobacillus reuteri).